A 403-amino-acid chain; its full sequence is 8-amino-7-oxononanoate synthase (403 aa).

R22 is a substrate binding site. 109-110 (GF) serves as a coordination point for pyridoxal 5'-phosphate. H134 is a binding site for substrate. Residues S178, H206, and T232 each coordinate pyridoxal 5'-phosphate. Residue K235 is modified to N6-(pyridoxal phosphate)lysine. T348 contacts substrate. The interval 383–403 (SNDSGSKPSIESSFELKKEAQ) is disordered. The span at 385–394 (DSGSKPSIES) shows a compositional bias: polar residues.

It belongs to the class-II pyridoxal-phosphate-dependent aminotransferase family. BioF subfamily. In terms of assembly, homodimer. Requires pyridoxal 5'-phosphate as cofactor.

The catalysed reaction is 6-carboxyhexanoyl-[ACP] + L-alanine + H(+) = (8S)-8-amino-7-oxononanoate + holo-[ACP] + CO2. It functions in the pathway cofactor biosynthesis; biotin biosynthesis. In terms of biological role, catalyzes the decarboxylative condensation of pimeloyl-[acyl-carrier protein] and L-alanine to produce 8-amino-7-oxononanoate (AON), [acyl-carrier protein], and carbon dioxide. The polypeptide is 8-amino-7-oxononanoate synthase (Vibrio atlanticus (strain LGP32) (Vibrio splendidus (strain Mel32))).